Here is a 273-residue protein sequence, read N- to C-terminus: Urease accessory protein UreD (273 aa).

It belongs to the UreD family. In terms of assembly, ureD, UreF and UreG form a complex that acts as a GTP-hydrolysis-dependent molecular chaperone, activating the urease apoprotein by helping to assemble the nickel containing metallocenter of UreC. The UreE protein probably delivers the nickel.

Its subcellular location is the cytoplasm. In terms of biological role, required for maturation of urease via the functional incorporation of the urease nickel metallocenter. The protein is Urease accessory protein UreD of Rhizobium leguminosarum bv. trifolii (strain WSM2304).